Here is a 475-residue protein sequence, read N- to C-terminus: Peroxisome proliferator-activated receptor gamma (475 aa).

S82 is subject to Phosphoserine; by MAPK. Residues 106 to 180 constitute a DNA-binding region (nuclear receptor); the sequence is AIECRVCSDK…VGMSHNAIRF (75 aa). 2 consecutive NR C4-type zinc fingers follow at residues 109–129 and 146–168; these read CRVCSDKASGFHYGVHACEGC and CDLNCRIHKKSRNKCQYCRFQKC. The segment at 175–250 is interaction with FAM120B; that stretch reads HNAIRFGRMP…DKSPFVIYDM (76 aa). Residues 208–473 form the NR LBD domain; the sequence is DLRALAKHLY…HPLLQEIYKD (266 aa). A Glycyl lysine isopeptide (Lys-Gly) (interchain with G-Cter in ubiquitin) cross-link involves residue K222. Residues 465 to 473 carry the 9aaTAD motif; it reads PLLQEIYKD.

It belongs to the nuclear hormone receptor family. NR1 subfamily. In terms of assembly, interacts with FOXO1 (acetylated form). Heterodimer with other nuclear receptors, such as RXRA. The heterodimer with the retinoic acid receptor RXRA is called adipocyte-specific transcription factor ARF6. Interacts with NCOA6 coactivator, leading to a strong increase in transcription of target genes. Interacts with coactivator PPARBP, leading to a mild increase in transcription of target genes. Interacts with NOCA7 in a ligand-inducible manner. Interacts with NCOA1 and NCOA2 LXXLL motifs. Interacts with ASXL1, ASXL2, DNTTIP2, FAM120B, MAP2K1/MEK1, NR0B2, PDPK1, PRDM16, PRMT2 and TGFB1I1. Interacts (when activated by agonist) with PPP5C. Interacts with HELZ2 and THRAP3; the interaction stimulates the transcriptional activity of PPARG. Interacts with PER2, the interaction is ligand dependent and blocks PPARG recruitment to target promoters. Interacts with NOCT. Interacts with ACTN4. Interacts (when in the liganded conformation) with GPS2. Interacts with CRY1 and CRY2 in a ligand-dependent manner. In the absence of hormonal ligand, interacts with TACC1. In macrophages, interacts with PAQR3 and STUB1; the interactions promote PPARG poylubiquitination and STUB1-mediated degradation. Phosphorylated at basal conditions and dephosphorylated when treated with the ligand. May be dephosphorylated by PPP5C. The phosphorylated form may be inactive and dephosphorylation induces adipogenic activity. Post-translationally, ubiquitinated by E3 ubiquitin-protein ligase complex containing FBXO9; leading to proteasomal degradation. Ubiquitinated at Lys-222 by TRIM55 leading to proteasomal degradation. Ubiquitinated by E3 ubiquitin-protein ligase STUB1/CHIP; leading to proteasomal degradation.

Its subcellular location is the nucleus. The protein localises to the cytoplasm. Its activity is regulated as follows. PDPK1 activates its transcriptional activity independently of its kinase activity. Nuclear receptor that binds peroxisome proliferators such as hypolipidemic drugs and fatty acids. Once activated by a ligand, the nuclear receptor binds to DNA specific PPAR response elements (PPRE) and modulates the transcription of its target genes, such as acyl-CoA oxidase. It therefore controls the peroxisomal beta-oxidation pathway of fatty acids. Key regulator of adipocyte differentiation and glucose homeostasis. ARF6 acts as a key regulator of the tissue-specific adipocyte P2 (aP2) enhancer. Acts as a critical regulator of gut homeostasis by suppressing NF-kappa-B-mediated pro-inflammatory responses. Plays a role in the regulation of cardiovascular circadian rhythms by regulating the transcription of BMAL1 in the blood vessels. The chain is Peroxisome proliferator-activated receptor gamma (PPARG) from Oryctolagus cuniculus (Rabbit).